The primary structure comprises 37 residues: Large ribosomal subunit protein bL36 (37 aa).

It belongs to the bacterial ribosomal protein bL36 family.

In Idiomarina loihiensis (strain ATCC BAA-735 / DSM 15497 / L2-TR), this protein is Large ribosomal subunit protein bL36.